A 327-amino-acid chain; its full sequence is Eukaryotic translation initiation factor 3 subunit I (327 aa).

WD repeat units lie at residues 8–49, 51–91, 144–183, 188–227, 229–268, and 285–324; these read GHDR…GTYD, HNGV…NSVS, SLQT…DIVN, AHKF…CLKT, KAER…GHFE, and GHFG…LKFD.

Belongs to the eIF-3 subunit I family. Component of the eukaryotic translation initiation factor 3 (eIF-3) complex.

The protein resides in the cytoplasm. In terms of biological role, component of the eukaryotic translation initiation factor 3 (eIF-3) complex, which is involved in protein synthesis of a specialized repertoire of mRNAs and, together with other initiation factors, stimulates binding of mRNA and methionyl-tRNAi to the 40S ribosome. The eIF-3 complex specifically targets and initiates translation of a subset of mRNAs involved in cell proliferation. This is Eukaryotic translation initiation factor 3 subunit I from Brugia malayi (Filarial nematode worm).